Here is a 138-residue protein sequence, read N- to C-terminus: NADPH-dependent 7-cyano-7-deazaguanine reductase (138 aa).

C53 acts as the Thioimide intermediate in catalysis. D60 serves as the catalytic Proton donor. Substrate contacts are provided by residues 75–77 (VEL) and 94–95 (HE).

Belongs to the GTP cyclohydrolase I family. QueF type 1 subfamily.

It localises to the cytoplasm. It catalyses the reaction 7-aminomethyl-7-carbaguanine + 2 NADP(+) = 7-cyano-7-deazaguanine + 2 NADPH + 3 H(+). The protein operates within tRNA modification; tRNA-queuosine biosynthesis. Functionally, catalyzes the NADPH-dependent reduction of 7-cyano-7-deazaguanine (preQ0) to 7-aminomethyl-7-deazaguanine (preQ1). The chain is NADPH-dependent 7-cyano-7-deazaguanine reductase from Gloeothece citriformis (strain PCC 7424) (Cyanothece sp. (strain PCC 7424)).